The sequence spans 46 residues: Protein YmiA (46 aa).

The chain crosses the membrane as a helical span at residues 22 to 42 (AWLAVFLGSALFWVVVALLIW).

The protein localises to the cell inner membrane. This chain is Protein YmiA (ymiA), found in Escherichia coli (strain K12).